The chain runs to 161 residues: MTRGPVRLDVAISYALPRAGLPAAVSFRRWVAAALKGRIREADLAIRVVDAKEGQSLNRHYRGKDYATNVLSFPAEVPEGLPKGVKFPLLGDLVICAPVVAREADEQGKALNAHYAHLTVHGVLHLLGWDHEDDKEAEAMEQLEREILAELGIDDPYAGER.

Zn(2+) contacts are provided by H121, H125, and H131.

This sequence belongs to the endoribonuclease YbeY family. Zn(2+) is required as a cofactor.

The protein resides in the cytoplasm. Its function is as follows. Single strand-specific metallo-endoribonuclease involved in late-stage 70S ribosome quality control and in maturation of the 3' terminus of the 16S rRNA. The chain is Endoribonuclease YbeY from Stenotrophomonas maltophilia (strain K279a).